The primary structure comprises 238 residues: Fish-egg lectin (238 aa).

Repeat copies occupy residues 1 to 34 (LDCTVIDGNLKQIDAGSGSVVGVNNLNETFVLID), 35 to 68 (NVFTKISGSLKHFSVGPAGQLGVNTANNIFKYQS), 69 to 106 (GGFVQLAGLLKQVDAGGDQIIAGVNMYDDIYCLNMDAN), 107 to 156 (NKWP…CSGS), and 157 to 199 (GSFI…KPDG). The segment at 1 to 199 (LDCTVIDGNL…TGVTRSKPDG (199 aa)) is 5 X approximate tandem repeats. 4 disulfides stabilise this stretch: Cys-3–Cys-234, Cys-100–Cys-153, Cys-128–Cys-133, and Cys-208–Cys-226. A glycan (N-linked (GlcNAc...) asparagine) is linked at Asn-27.

This sequence belongs to the tectonin family. As to expression, expressed in the eggs.

Its subcellular location is the secreted. In terms of biological role, lipopolysaccharide-binding protein with a very low agglutinating activity for human A-type erythrocytes and interacts with both Gram-positive and Gram-negative bacteria. In Cyprinus carpio (Common carp), this protein is Fish-egg lectin.